A 557-amino-acid chain; its full sequence is Hepatocyte nuclear factor 1-beta (557 aa).

Residues 1-31 are dimerization; the sequence is MVSKLTSLQQELLSALLSSGVTKEVLVQALE. The HNF-p1 domain maps to 1–32; it reads MVSKLTSLQQELLSALLSSGVTKEVLVQALEE. Residues Ser49, Ser52, Ser75, and Ser80 each carry the phosphoserine modification. The interval 64–85 is disordered; it reads TLTNGHAKGRLSGDEGSEDGDD. In terms of domain architecture, POU-specific atypical spans 93-188; it reads KELQALNTEE…ILRQFNQTVQ (96 aa). The segment at residues 231-311 is a DNA-binding region (homeobox; HNF1-type); that stretch reads MRRNRFKWGP…NRRKEEAFRQ (81 aa). The disordered stretch occupies residues 324–352; sequence HSLNPLLSHGSPHHQPSSSPPNKLSGVRY. Low complexity predominate over residues 328–344; sequence PLLSHGSPHHQPSSSPP.

This sequence belongs to the HNF1 homeobox family. Binds DNA as a dimer. Can form homodimer or heterodimer with HNF1-alpha. Interacts (via HNF-p1 domain) with PCBD1; the interaction increases its transactivation activity.

Its subcellular location is the nucleus. In terms of biological role, transcription factor that binds to the inverted palindrome 5'-GTTAATNATTAAC-3'. Binds to the FPC element in the cAMP regulatory unit of the PLAU gene. Transcriptional activity is increased by coactivator PCBD1. In Homo sapiens (Human), this protein is Hepatocyte nuclear factor 1-beta (HNF1B).